Here is an 839-residue protein sequence, read N- to C-terminus: Autophagy-related protein 9A (839 aa).

The tract at residues 1 to 20 (MAQFDTEYQRLEASYSDSPP) is disordered. An N-acetylalanine modification is found at Ala-2. Residues 2–61 (AQFDTEYQRLEASYSDSPPGEEDLLVHVAEGSKSPWHHIENLDLFFSRVYNLHQKNGFTC) lie on the Cytoplasmic side of the membrane. The Tyrosine-based sorting signal motif lies at 8 to 11 (YQRL). A phosphoserine mark is found at Ser-14, Ser-16, and Ser-18. The helical transmembrane segment at 62–84 (MLIGEIFELMQFLFVVAFTTFLV) threads the bilayer. Topologically, residues 85–128 (SCVDYDILFANKMVNHSLHPTEPVKVTLPDAFLPAQVCSARIQE) are lumenal. N-linked (GlcNAc...) asparagine glycosylation is present at Asn-99. A helical transmembrane segment spans residues 129-154 (NGSLITILVIAGVFWIHRLIKFIYNI). Topologically, residues 155 to 290 (CCYWEIHSFY…ELAQRLSNRI (136 aa)) are cytoplasmic. Residues 291-301 (LWIGIANFLLC) lie within the membrane without spanning it. At 302-319 (PLILIWQILYAFFSYAEV) the chain is on the cytoplasmic side. An intramembrane segment occupies 320 to 328 (LKREPGALG). The Cytoplasmic segment spans residues 329-371 (ARCWSLYGRCYLRHFNELEHELQSRLNRGYKPASKYMNCFLSP). Residues 372–397 (LLTLLAKNGAFFAGSILAVLIALTIY) form a helical membrane-spanning segment. The Lumenal portion of the chain corresponds to 398–406 (DEDVLAVEH). Residues 407–424 (VLTTVTLLGVTVTVCRSF) traverse the membrane as a helical segment. Residues 425–470 (IPDQHMVFCPEQLLRVILAHIHYMPDHWQGNAHRSQTRDEFAQLFQ) lie on the Cytoplasmic side of the membrane. An intramembrane segment occupies 471-480 (YKAVFILEEL). The Cytoplasmic portion of the chain corresponds to 481–483 (LSP). An intramembrane segment occupies 484 to 492 (IVTPLILIF). At 493–839 (CLRPRALEII…DELPPQVHKV (347 aa)) the chain is on the cytoplasmic side. Phosphoserine is present on residues Ser-656, Ser-735, Ser-738, Ser-741, and Ser-828. Disordered regions lie at residues 656–686 (SPLQ…SSGS) and 717–839 (HKQQ…VHKV). Residues 724-736 (EPERHVWHRRESD) are compositionally biased toward basic and acidic residues. Composition is skewed to acidic residues over residues 737 to 747 (ESGESAPDEGG) and 823 to 832 (VPEEGSEDEL).

This sequence belongs to the ATG9 family. Homotrimer; forms a homotrimer with a central pore that forms a path between the two membrane leaflets. Interacts (via cytoplasmic its C-terminus) with ATG2A. Interacts with SUPT20H. Interacts (via the tyrosine-based sorting signal motif) with AP4M1; promoting association with the AP-4 complex. Interacts with ARFIP1 and ARFIP2. Interacts with PI4K2A and PI4KB. Interacts with ATG4A; the interaction is direct and promotes ATG9A trafficking. Post-translationally, ufmylated in a DDRGK1 dependent manner.

The protein localises to the preautophagosomal structure membrane. It localises to the cytoplasmic vesicle. Its subcellular location is the autophagosome membrane. The protein resides in the golgi apparatus. It is found in the trans-Golgi network membrane. The protein localises to the late endosome membrane. It localises to the recycling endosome membrane. Its subcellular location is the endoplasmic reticulum membrane. The protein resides in the mitochondrion membrane. The catalysed reaction is a 1,2-diacyl-sn-glycero-3-phosphocholine(in) = a 1,2-diacyl-sn-glycero-3-phosphocholine(out). The enzyme catalyses a 1,2-diacyl-sn-glycero-3-phospho-L-serine(in) = a 1,2-diacyl-sn-glycero-3-phospho-L-serine(out). It carries out the reaction a 1,2-diacyl-sn-glycero-3-phosphoethanolamine(in) = a 1,2-diacyl-sn-glycero-3-phosphoethanolamine(out). Its function is as follows. Phospholipid scramblase involved in autophagy by mediating autophagosomal membrane expansion. Cycles between the preautophagosomal structure/phagophore assembly site (PAS) and the cytoplasmic vesicle pool and supplies membrane for the growing autophagosome. Lipid scramblase activity plays a key role in preautophagosomal structure/phagophore assembly by distributing the phospholipids that arrive through ATG2 (ATG2A or ATG2B) from the cytoplasmic to the luminal leaflet of the bilayer, thereby driving autophagosomal membrane expansion. Also required to supply phosphatidylinositol 4-phosphate to the autophagosome initiation site by recruiting the phosphatidylinositol 4-kinase beta (PI4KB) in a process dependent on ARFIP2, but not ARFIP1. In addition to autophagy, also plays a role in necrotic cell death. This chain is Autophagy-related protein 9A, found in Homo sapiens (Human).